The sequence spans 253 residues: Acidic endochitinase Q (253 aa).

Positions 1-24 are cleaved as a signal peptide; it reads MEFSGSPMALFCCVFFLFLTGSLA. The active-site Proton donor is Glu92. Residues Cys212 and Cys244 are joined by a disulfide bond.

Belongs to the glycosyl hydrolase 19 family. Chitinase class I subfamily.

It is found in the secreted. It catalyses the reaction Random endo-hydrolysis of N-acetyl-beta-D-glucosaminide (1-&gt;4)-beta-linkages in chitin and chitodextrins.. Defense against chitin-containing fungal pathogens. The protein is Acidic endochitinase Q of Nicotiana tabacum (Common tobacco).